A 499-amino-acid polypeptide reads, in one-letter code: Putative antiporter subunit mnhD2 (499 aa).

Helical transmembrane passes span 3–23 (LSNL…ILVF), 33–53 (YLYL…LIYV), 79–99 (LSLI…AYGF), 109–129 (YHLP…FLTS), 131–151 (LFNL…LITL), 162–182 (IIYV…IGLL), 210–230 (ISLI…FMWL), 241–261 (LAAL…IRFF), 272–292 (IHPL…IGVI), 309–329 (IGFI…GAIF), 331–351 (LVND…LVYI), 370–390 (FGVA…FSGF), 404–424 (GNYI…YSLF), and 452–472 (ILSI…VVLN).

Belongs to the CPA3 antiporters (TC 2.A.63) subunit D family. As to quaternary structure, may form a heterooligomeric complex that consists of seven subunits: mnhA2, mnhB2, mnhC2, mnhD2, mnhE2, mnhF2 and mnhG2.

The protein localises to the cell membrane. Its function is as follows. Expression of the mnh2 operon in E.coli is not able to catalyze Na(+)Li(+)/H(+) antiport. It does however confer higher growth rates than the control strain at up to pH 9.5. The operon may encode an NADH-ubiquinone oxidoreductase. This Staphylococcus aureus protein is Putative antiporter subunit mnhD2 (mnhD2).